A 176-amino-acid chain; its full sequence is ATP synthase subunit b (176 aa).

The helical transmembrane segment at 24 to 43 (FAFRVVNFVIFAGIIWKAAG) threads the bilayer.

The protein belongs to the ATPase B chain family. In terms of assembly, F-type ATPases have 2 components, F(1) - the catalytic core - and F(0) - the membrane proton channel. F(1) has five subunits: alpha(3), beta(3), gamma(1), delta(1), epsilon(1). F(0) has three main subunits: a(1), b(2) and c(10-14). The alpha and beta chains form an alternating ring which encloses part of the gamma chain. F(1) is attached to F(0) by a central stalk formed by the gamma and epsilon chains, while a peripheral stalk is formed by the delta and b chains.

It localises to the cell inner membrane. Its function is as follows. F(1)F(0) ATP synthase produces ATP from ADP in the presence of a proton or sodium gradient. F-type ATPases consist of two structural domains, F(1) containing the extramembraneous catalytic core and F(0) containing the membrane proton channel, linked together by a central stalk and a peripheral stalk. During catalysis, ATP synthesis in the catalytic domain of F(1) is coupled via a rotary mechanism of the central stalk subunits to proton translocation. In terms of biological role, component of the F(0) channel, it forms part of the peripheral stalk, linking F(1) to F(0). This is ATP synthase subunit b from Nitratidesulfovibrio vulgaris (strain ATCC 29579 / DSM 644 / CCUG 34227 / NCIMB 8303 / VKM B-1760 / Hildenborough) (Desulfovibrio vulgaris).